Consider the following 629-residue polypeptide: tRNA uridine 5-carboxymethylaminomethyl modification enzyme MnmG (629 aa).

FAD is bound by residues 13–18 (GGGHAG), V125, and S180. 273 to 287 (GPRYCPSIEDKVMRF) serves as a coordination point for NAD(+). Position 370 (Q370) interacts with FAD.

It belongs to the MnmG family. Homodimer. Heterotetramer of two MnmE and two MnmG subunits. The cofactor is FAD.

It is found in the cytoplasm. Functionally, NAD-binding protein involved in the addition of a carboxymethylaminomethyl (cmnm) group at the wobble position (U34) of certain tRNAs, forming tRNA-cmnm(5)s(2)U34. The chain is tRNA uridine 5-carboxymethylaminomethyl modification enzyme MnmG from Serratia proteamaculans (strain 568).